The sequence spans 131 residues: Global transcriptional regulator Spx 1 (131 aa).

Cysteine 10 and cysteine 13 are oxidised to a cystine.

The protein belongs to the ArsC family. Spx subfamily. In terms of assembly, interacts with the C-terminal domain of the alpha subunit of the RNAP.

The protein localises to the cytoplasm. Functionally, global transcriptional regulator that plays a key role in stress response and exerts either positive or negative regulation of genes. Acts by interacting with the C-terminal domain of the alpha subunit of the RNA polymerase (RNAP). This interaction can enhance binding of RNAP to the promoter region of target genes and stimulate their transcription, or block interaction of RNAP with activator. This chain is Global transcriptional regulator Spx 1, found in Bacillus anthracis.